Consider the following 528-residue polypeptide: Chaperonin GroEL, chloroplastic (528 aa).

ATP contacts are provided by residues 29–32, 86–90, glycine 414, 480–482, and aspartate 496; these read TLGP, DGTTT, and DAA.

Belongs to the chaperonin (HSP60) family. Forms a cylinder of 14 subunits composed of two heptameric rings stacked back-to-back. Interacts with the co-chaperonin GroES.

It is found in the plastid. Its subcellular location is the chloroplast. It carries out the reaction ATP + H2O + a folded polypeptide = ADP + phosphate + an unfolded polypeptide.. Its function is as follows. Together with its co-chaperonin GroES, plays an essential role in assisting protein folding. The GroEL-GroES system forms a nano-cage that allows encapsulation of the non-native substrate proteins and provides a physical environment optimized to promote and accelerate protein folding. This Pyropia yezoensis (Susabi-nori) protein is Chaperonin GroEL, chloroplastic.